We begin with the raw amino-acid sequence, 37 residues long: Large ribosomal subunit protein bL36c (37 aa).

Belongs to the bacterial ribosomal protein bL36 family.

The protein resides in the plastid. Its subcellular location is the chloroplast. The protein is Large ribosomal subunit protein bL36c (rpl36) of Marchantia polymorpha (Common liverwort).